Reading from the N-terminus, the 450-residue chain is Divalent metal cation transporter MntH (450 aa).

A run of 11 helical transmembrane segments spans residues 34-54, 59-81, 108-128, 141-161, 170-190, 212-232, 263-283, 305-325, 361-381, 383-403, and 422-442; these read LSFL…GNWI, GGAQ…AMLL, IAII…IAEV, IPLI…LFIM, AIVG…VYIS, GILY…NLYL, IQLS…ASLF, PVLG…ALLA, SLAV…AAKI, QLLV…LIPL, and VNII…YLIV.

The protein belongs to the NRAMP family.

It localises to the cell membrane. Its function is as follows. H(+)-stimulated, divalent metal cation uptake system. This is Divalent metal cation transporter MntH from Staphylococcus aureus (strain MRSA252).